The chain runs to 233 residues: uncharacterized protein (233 aa).

The protein belongs to the methyltransferase superfamily.

This is an uncharacterized protein from Bacillus subtilis (strain 168).